The following is a 478-amino-acid chain: Protein nucleotidyltransferase YdiU (478 aa).

The ATP site is built by Gly84, Gly86, Arg87, Lys107, Asp119, Gly120, Arg170, and Arg177. Asp246 acts as the Proton acceptor in catalysis. Positions 247 and 256 each coordinate Mg(2+). Asp256 is a binding site for ATP.

The protein belongs to the SELO family. Mg(2+) serves as cofactor. Requires Mn(2+) as cofactor.

It catalyses the reaction L-seryl-[protein] + ATP = 3-O-(5'-adenylyl)-L-seryl-[protein] + diphosphate. The catalysed reaction is L-threonyl-[protein] + ATP = 3-O-(5'-adenylyl)-L-threonyl-[protein] + diphosphate. The enzyme catalyses L-tyrosyl-[protein] + ATP = O-(5'-adenylyl)-L-tyrosyl-[protein] + diphosphate. It carries out the reaction L-histidyl-[protein] + UTP = N(tele)-(5'-uridylyl)-L-histidyl-[protein] + diphosphate. It catalyses the reaction L-seryl-[protein] + UTP = O-(5'-uridylyl)-L-seryl-[protein] + diphosphate. The catalysed reaction is L-tyrosyl-[protein] + UTP = O-(5'-uridylyl)-L-tyrosyl-[protein] + diphosphate. Nucleotidyltransferase involved in the post-translational modification of proteins. It can catalyze the addition of adenosine monophosphate (AMP) or uridine monophosphate (UMP) to a protein, resulting in modifications known as AMPylation and UMPylation. The sequence is that of Protein nucleotidyltransferase YdiU from Escherichia coli O81 (strain ED1a).